The primary structure comprises 209 residues: Large ribosomal subunit protein uL3 (209 aa).

A disordered region spans residues 133–153 (THGNSLSHRAPGSIGQNQTPG). Position 150 is an N5-methylglutamine (glutamine 150).

It belongs to the universal ribosomal protein uL3 family. As to quaternary structure, part of the 50S ribosomal subunit. Forms a cluster with proteins L14 and L19. Methylated by PrmB.

Its function is as follows. One of the primary rRNA binding proteins, it binds directly near the 3'-end of the 23S rRNA, where it nucleates assembly of the 50S subunit. The polypeptide is Large ribosomal subunit protein uL3 (Pectobacterium atrosepticum (strain SCRI 1043 / ATCC BAA-672) (Erwinia carotovora subsp. atroseptica)).